The primary structure comprises 329 residues: DNA-directed RNA polymerase subunit alpha (329 aa).

The interval 1–233 (MVREKVKVST…NLFIPFLHVE (233 aa)) is alpha N-terminal domain (alpha-NTD). The tract at residues 266 to 329 (TKELAFQYIF…KKILDILEKK (64 aa)) is alpha C-terminal domain (alpha-CTD).

Belongs to the RNA polymerase alpha chain family. In terms of assembly, in plastids the minimal PEP RNA polymerase catalytic core is composed of four subunits: alpha, beta, beta', and beta''. When a (nuclear-encoded) sigma factor is associated with the core the holoenzyme is formed, which can initiate transcription.

Its subcellular location is the plastid. It is found in the chloroplast. The enzyme catalyses RNA(n) + a ribonucleoside 5'-triphosphate = RNA(n+1) + diphosphate. DNA-dependent RNA polymerase catalyzes the transcription of DNA into RNA using the four ribonucleoside triphosphates as substrates. The sequence is that of DNA-directed RNA polymerase subunit alpha from Arabidopsis thaliana (Mouse-ear cress).